Here is a 206-residue protein sequence, read N- to C-terminus: Small ribosomal subunit protein uS4 (206 aa).

One can recognise an S4 RNA-binding domain in the interval 94–156; it reads RRLDNVVYRL…SRRRMYFKNL (63 aa).

This sequence belongs to the universal ribosomal protein uS4 family. In terms of assembly, part of the 30S ribosomal subunit. Contacts protein S5. The interaction surface between S4 and S5 is involved in control of translational fidelity.

Its function is as follows. One of the primary rRNA binding proteins, it binds directly to 16S rRNA where it nucleates assembly of the body of the 30S subunit. In terms of biological role, with S5 and S12 plays an important role in translational accuracy. The protein is Small ribosomal subunit protein uS4 of Roseiflexus castenholzii (strain DSM 13941 / HLO8).